The primary structure comprises 272 residues: HMP-PP phosphatase (272 aa).

The active-site Nucleophile is the aspartate 8. The Mg(2+) site is built by aspartate 8, aspartate 10, and aspartate 212.

The protein belongs to the HAD-like hydrolase superfamily. Cof family. Requires Mg(2+) as cofactor.

It carries out the reaction 4-amino-2-methyl-5-(diphosphooxymethyl)pyrimidine + H2O = 4-amino-2-methyl-5-(phosphooxymethyl)pyrimidine + phosphate + H(+). Catalyzes the hydrolysis of 4-amino-2-methyl-5-hydroxymethylpyrimidine pyrophosphate (HMP-PP) to 4-amino-2-methyl-5-hydroxymethylpyrimidine phosphate (HMP-P). The polypeptide is HMP-PP phosphatase (Shigella flexneri serotype 5b (strain 8401)).